A 530-amino-acid polypeptide reads, in one-letter code: Glucocorticoid modulatory element-binding protein 2 (530 aa).

The SAND domain maps to 81 to 163 (EEGENLEAEI…RKIMDSGELD (83 aa)). A Zn(2+)-binding site is contributed by C110. DNA is bound by residues K136, K140, K143, and R154. A Glycyl lysine isopeptide (Lys-Gly) (interchain with G-Cter in SUMO1); alternate cross-link involves residue K155. K155 participates in a covalent cross-link: Glycyl lysine isopeptide (Lys-Gly) (interchain with G-Cter in SUMO2); alternate. Positions 167, 171, and 175 each coordinate Zn(2+). 2 coiled-coil regions span residues 245–270 (LLDEVIQEFQQELEETMKGLQQRVQD) and 304–344 (QMDR…SNVL). Position 373 is a phosphoserine (S373).

In terms of assembly, homodimer, and heterodimer of GMEB1 and GMEB2. Interacts with the glucocorticoid receptor (NR3C1). May interact with CREB-binding protein (CBP).

The protein localises to the nucleus. It localises to the cytoplasm. In terms of biological role, trans-acting factor that binds to glucocorticoid modulatory elements (GME) present in the TAT (tyrosine aminotransferase) promoter and increases sensitivity to low concentrations of glucocorticoids. Also binds to the transferrin receptor promoter. The protein is Glucocorticoid modulatory element-binding protein 2 (Gmeb2) of Mus musculus (Mouse).